A 355-amino-acid polypeptide reads, in one-letter code: D-alanine--D-alanine ligase (355 aa).

The region spanning 143–350 is the ATP-grasp domain; sequence KTIFSNHKLP…IEQLVAKLVD (208 aa). 178 to 233 provides a ligand contact to ATP; sequence LKKLKFPVFVKPSNSGSSLGISKVKNESEILLALEKAWGIDPRILIEEGLEVREIE. Mg(2+) is bound by residues Asp303, Glu317, and Asn319.

This sequence belongs to the D-alanine--D-alanine ligase family. Mg(2+) is required as a cofactor. It depends on Mn(2+) as a cofactor.

It is found in the cytoplasm. It catalyses the reaction 2 D-alanine + ATP = D-alanyl-D-alanine + ADP + phosphate + H(+). It functions in the pathway cell wall biogenesis; peptidoglycan biosynthesis. Cell wall formation. This is D-alanine--D-alanine ligase from Prochlorococcus marinus (strain MIT 9301).